The chain runs to 83 residues: Cytochrome b559 subunit alpha (83 aa).

Residues 21 to 35 form a helical membrane-spanning segment; sequence VIHSITIPSLFIAGW. Residue histidine 23 participates in heme binding.

It belongs to the PsbE/PsbF family. In terms of assembly, heterodimer of an alpha subunit and a beta subunit. PSII is composed of 1 copy each of membrane proteins PsbA, PsbB, PsbC, PsbD, PsbE, PsbF, PsbH, PsbI, PsbJ, PsbK, PsbL, PsbM, PsbT, PsbX, PsbY, PsbZ, Psb30/Ycf12, at least 3 peripheral proteins of the oxygen-evolving complex and a large number of cofactors. It forms dimeric complexes. Requires heme b as cofactor.

The protein localises to the plastid. The protein resides in the chloroplast thylakoid membrane. In terms of biological role, this b-type cytochrome is tightly associated with the reaction center of photosystem II (PSII). PSII is a light-driven water:plastoquinone oxidoreductase that uses light energy to abstract electrons from H(2)O, generating O(2) and a proton gradient subsequently used for ATP formation. It consists of a core antenna complex that captures photons, and an electron transfer chain that converts photonic excitation into a charge separation. The protein is Cytochrome b559 subunit alpha of Daucus carota (Wild carrot).